The primary structure comprises 220 residues: Ribosomal RNA large subunit methyltransferase E (220 aa).

S-adenosyl-L-methionine-binding residues include Gly-64, Trp-66, Asp-84, Asp-100, and Asp-125. Residue Lys-165 is the Proton acceptor of the active site.

Belongs to the class I-like SAM-binding methyltransferase superfamily. RNA methyltransferase RlmE family.

Its subcellular location is the cytoplasm. The enzyme catalyses uridine(2552) in 23S rRNA + S-adenosyl-L-methionine = 2'-O-methyluridine(2552) in 23S rRNA + S-adenosyl-L-homocysteine + H(+). In terms of biological role, specifically methylates the uridine in position 2552 of 23S rRNA at the 2'-O position of the ribose in the fully assembled 50S ribosomal subunit. The chain is Ribosomal RNA large subunit methyltransferase E from Thiobacillus denitrificans (strain ATCC 25259 / T1).